Here is a 359-residue protein sequence, read N- to C-terminus: Protein RecA (359 aa).

Position 69 to 76 (69 to 76) interacts with ATP; it reads GPESSGKT. A disordered region spans residues 337 to 359; sequence SANSVAKASEEDEEEEVDLEPEE. The segment covering 346–359 has biased composition (acidic residues); sequence EEDEEEEVDLEPEE.

Belongs to the RecA family.

It is found in the cytoplasm. Functionally, can catalyze the hydrolysis of ATP in the presence of single-stranded DNA, the ATP-dependent uptake of single-stranded DNA by duplex DNA, and the ATP-dependent hybridization of homologous single-stranded DNAs. It interacts with LexA causing its activation and leading to its autocatalytic cleavage. The sequence is that of Protein RecA from Nostoc punctiforme (strain ATCC 29133 / PCC 73102).